The sequence spans 119 residues: Large ribosomal subunit protein bL20 (119 aa).

It belongs to the bacterial ribosomal protein bL20 family.

Functionally, binds directly to 23S ribosomal RNA and is necessary for the in vitro assembly process of the 50S ribosomal subunit. It is not involved in the protein synthesizing functions of that subunit. The sequence is that of Large ribosomal subunit protein bL20 from Geobacillus thermodenitrificans (strain NG80-2).